A 780-amino-acid chain; its full sequence is ATP-dependent 6-phosphofructokinase, muscle type (780 aa).

Threonine 2 bears the N-acetylthreonine mark. An N-terminal catalytic PFK domain 1 region spans residues 2–390 (THEEHHAART…NWEVYKLLAH (389 aa)). ATP-binding positions include glycine 25, 88-89 (RC), and 118-121 (GDGS). Mg(2+) is bound at residue aspartate 119. Serine 133 carries the post-translational modification Phosphoserine. Residues 164 to 166 (SID), arginine 201, 208 to 210 (MGR), glutamate 264, arginine 292, and 298 to 301 (HVQR) each bind substrate. Catalysis depends on aspartate 166, which acts as the Proton acceptor. The residue at position 377 (serine 377) is a Phosphoserine. An interdomain linker region spans residues 391 to 401 (IRPPAPKSGSY). Residues 402–780 (TVAVMNVGAP…SRKRSGEATV (379 aa)) are C-terminal regulatory PFK domain 2. Residues arginine 471 and 528–532 (TVSNN) contribute to the beta-D-fructose 2,6-bisphosphate site. O-linked (GlcNAc) serine glycosylation occurs at serine 530. Lysine 557 carries the post-translational modification N6-(2-hydroxyisobutyryl)lysine. Beta-D-fructose 2,6-bisphosphate is bound by residues arginine 566, 573–575 (MGG), glutamate 629, arginine 655, and 661–664 (HMQQ). Serine 667 carries the phosphoserine modification. Position 735 (arginine 735) interacts with beta-D-fructose 2,6-bisphosphate. Serine 775 bears the Phosphoserine; by PKA mark.

This sequence belongs to the phosphofructokinase type A (PFKA) family. ATP-dependent PFK group I subfamily. Eukaryotic two domain clade 'E' sub-subfamily. In terms of assembly, homo- and heterotetramers. Phosphofructokinase (PFK) enzyme functions as a tetramer composed of different combinations of 3 types of subunits, called PFKM (M), PFKL (L) and PFKP (P). The composition of the PFK tetramer differs according to the tissue type it is present in. The kinetic and regulatory properties of the tetrameric enzyme are dependent on the subunit composition, hence can vary across tissues. Interacts (via C-terminus) with HK1 (via N-terminal spermatogenic cell-specific region). It depends on Mg(2+) as a cofactor. In terms of processing, glcNAcylation decreases enzyme activity.

The protein resides in the cytoplasm. It catalyses the reaction beta-D-fructose 6-phosphate + ATP = beta-D-fructose 1,6-bisphosphate + ADP + H(+). Its pathway is carbohydrate degradation; glycolysis; D-glyceraldehyde 3-phosphate and glycerone phosphate from D-glucose: step 3/4. Allosterically activated by ADP, AMP, or fructose 2,6-bisphosphate, and allosterically inhibited by ATP or citrate. In terms of biological role, catalyzes the phosphorylation of D-fructose 6-phosphate to fructose 1,6-bisphosphate by ATP, the first committing step of glycolysis. In Oryctolagus cuniculus (Rabbit), this protein is ATP-dependent 6-phosphofructokinase, muscle type (PFKM).